A 337-amino-acid polypeptide reads, in one-letter code: D-alanine--D-alanine ligase (337 aa).

One can recognise an ATP-grasp domain in the interval 124–330 (KMWFSALGIP…FTEYLSLVIN (207 aa)). Position 154 to 209 (154 to 209 (ALANWGSIFIKAASQGSSVGCYKVDDSSKVAQVLKDAFGYAPYVVVEKTIKARELE)) interacts with ATP. The Mg(2+) site is built by Asp284, Glu297, and Asn299.

This sequence belongs to the D-alanine--D-alanine ligase family. Mg(2+) serves as cofactor. Mn(2+) is required as a cofactor.

The protein resides in the cytoplasm. It catalyses the reaction 2 D-alanine + ATP = D-alanyl-D-alanine + ADP + phosphate + H(+). Its pathway is cell wall biogenesis; peptidoglycan biosynthesis. Functionally, cell wall formation. In Shewanella sp. (strain W3-18-1), this protein is D-alanine--D-alanine ligase.